A 145-amino-acid polypeptide reads, in one-letter code: LIM domain only protein 3 (145 aa).

LIM zinc-binding domains are found at residues 11-73 and 75-137; these read KGCA…LFGT and GNCA…GLMK.

In Rattus norvegicus (Rat), this protein is LIM domain only protein 3 (Lmo3).